The sequence spans 362 residues: tRNA N6-adenosine threonylcarbamoyltransferase (362 aa).

Residues His-116 and His-120 each coordinate Fe cation. Substrate is bound by residues 138–142, Asp-171, Gly-184, and Asn-284; that span reads LVSGG. Asp-312 is a binding site for Fe cation.

It belongs to the KAE1 / TsaD family. Fe(2+) serves as cofactor.

It is found in the cytoplasm. The catalysed reaction is L-threonylcarbamoyladenylate + adenosine(37) in tRNA = N(6)-L-threonylcarbamoyladenosine(37) in tRNA + AMP + H(+). Required for the formation of a threonylcarbamoyl group on adenosine at position 37 (t(6)A37) in tRNAs that read codons beginning with adenine. Is involved in the transfer of the threonylcarbamoyl moiety of threonylcarbamoyl-AMP (TC-AMP) to the N6 group of A37, together with TsaE and TsaB. TsaD likely plays a direct catalytic role in this reaction. This Chelativorans sp. (strain BNC1) protein is tRNA N6-adenosine threonylcarbamoyltransferase.